Here is a 171-residue protein sequence, read N- to C-terminus: Adenine phosphoribosyltransferase (171 aa).

It belongs to the purine/pyrimidine phosphoribosyltransferase family. In terms of assembly, homodimer.

The protein localises to the cytoplasm. The enzyme catalyses AMP + diphosphate = 5-phospho-alpha-D-ribose 1-diphosphate + adenine. The protein operates within purine metabolism; AMP biosynthesis via salvage pathway; AMP from adenine: step 1/1. In terms of biological role, catalyzes a salvage reaction resulting in the formation of AMP, that is energically less costly than de novo synthesis. This chain is Adenine phosphoribosyltransferase, found in Methylococcus capsulatus (strain ATCC 33009 / NCIMB 11132 / Bath).